An 859-amino-acid polypeptide reads, in one-letter code: MELQTKSPTTQNDFSQHTPMMRQYLRIKAEYPDLLVFYRMGDFYELFYDDAKKAAKLLNITLTARGQSAGHAIPMAGVPYHAVENYLTKLVRLGESVVICEQIGDPATSKGPVAREVTRIITPGTVSDEALLDEHRDNTLMVIHQEKDRFGIATLDITSGRFLIQEIISENALFAEIERIRPAELLISEENSVHPLKADSIKRRPPWEFDHATALTLLCQQFQTKSLDGFGITHLPLAITAAGCLLQYVNYTQKSALPHIHSIQAEQNEEALFIDANTRRNLELITNLQGEEVHSLAWLLDHTATPMGSRLLRRWINRPLRDQILLQQRQNAVSTLLEKRNYSEIYENLRHIGDLERIVARIALRSARPRDLMQLRQALGVLPTLHQQLTNLPLNKQLQEIKNNLGLFDELFRLLKKAIIENPPIVIRDGGVIADGYDAPLDELRNMSTNSHQFLIDLEQQERERTKINTVKVGYNRIHGYYIEISRAQAKQAPTEYIRRQTLKNVERYITPELKIFEDKVLSSRSRALAREKELYEQLLDTLIEKLIPLQQCASAIANLDVLNTLAERADTLNFNAPQFCDYPIIKIEAGRHPIVENVMTDPFMPNDTHLDEKRRMLIITGPNMGGKSTYMRQTALITLLAYIGSFVPAKNAQLGPIDRIFTRIGAADDLASGRSTFMVEMTETAAILHNATEESLVLMDEVGRGTSTFDGLSLAYACASYLATKLKAFALFATHYFELTALASTLQAVKNVHLDAVEHEEKIIFLHALREGPANKSYGLQVAQLAGIPRSVIQHARQKLEELENPVISETQQPQQNELFLPIENPVLTQLDKLNPDNLTPKQALDILYQLIQLRQQK.

ATP is bound at residue 622-629 (GPNMGGKS).

The protein belongs to the DNA mismatch repair MutS family.

Functionally, this protein is involved in the repair of mismatches in DNA. It is possible that it carries out the mismatch recognition step. This protein has a weak ATPase activity. This chain is DNA mismatch repair protein MutS, found in Coxiella burnetii (strain RSA 493 / Nine Mile phase I).